Consider the following 360-residue polypeptide: DNA replication and repair protein RecF (360 aa).

Position 30–37 (30–37 (GHNGSGKT)) interacts with ATP.

It belongs to the RecF family.

Its subcellular location is the cytoplasm. Its function is as follows. The RecF protein is involved in DNA metabolism; it is required for DNA replication and normal SOS inducibility. RecF binds preferentially to single-stranded, linear DNA. It also seems to bind ATP. In Actinobacillus pleuropneumoniae serotype 3 (strain JL03), this protein is DNA replication and repair protein RecF.